Here is a 232-residue protein sequence, read N- to C-terminus: dTTP/UTP pyrophosphatase (232 aa).

The active-site Proton acceptor is the D103.

This sequence belongs to the Maf family. YhdE subfamily. The cofactor is a divalent metal cation.

The protein resides in the cytoplasm. It catalyses the reaction dTTP + H2O = dTMP + diphosphate + H(+). It carries out the reaction UTP + H2O = UMP + diphosphate + H(+). Functionally, nucleoside triphosphate pyrophosphatase that hydrolyzes dTTP and UTP. May have a dual role in cell division arrest and in preventing the incorporation of modified nucleotides into cellular nucleic acids. This chain is dTTP/UTP pyrophosphatase, found in Bartonella henselae (strain ATCC 49882 / DSM 28221 / CCUG 30454 / Houston 1) (Rochalimaea henselae).